The sequence spans 292 residues: 4-hydroxybenzoate octaprenyltransferase (292 aa).

8 helical membrane-spanning segments follow: residues 23 to 43 (PIGIFLLLWPALWALWIAGEG), 47 to 67 (PGVAAVIVFGVVLMRAAGCVI), 98 to 118 (LILFMVLCLTAFALVLTMNWL), 141 to 161 (HLPQAYLGLAFGWAIPMTFAA), 164 to 184 (GSIPVVAWALYAATVLWALIY), 211 to 231 (YDREIIGALQIAMLAILAGIG), 233 to 253 (YLGLGGLYALGLAAAAGFSVY), and 270 to 290 (FLNNHWFGAAVFAGLFADYLW).

This sequence belongs to the UbiA prenyltransferase family. It depends on Mg(2+) as a cofactor.

It localises to the cell inner membrane. It carries out the reaction all-trans-octaprenyl diphosphate + 4-hydroxybenzoate = 4-hydroxy-3-(all-trans-octaprenyl)benzoate + diphosphate. The protein operates within cofactor biosynthesis; ubiquinone biosynthesis. Its function is as follows. Catalyzes the prenylation of para-hydroxybenzoate (PHB) with an all-trans polyprenyl group. Mediates the second step in the final reaction sequence of ubiquinone-8 (UQ-8) biosynthesis, which is the condensation of the polyisoprenoid side chain with PHB, generating the first membrane-bound Q intermediate 3-octaprenyl-4-hydroxybenzoate. This is 4-hydroxybenzoate octaprenyltransferase from Methylococcus capsulatus (strain ATCC 33009 / NCIMB 11132 / Bath).